We begin with the raw amino-acid sequence, 833 residues long: Leucine--tRNA ligase (833 aa).

Residues 41-52 carry the 'HIGH' region motif; sequence PYPSGAGLHVGH. Positions 610–614 match the 'KMSKS' region motif; sequence KMSKS. Lys-613 serves as a coordination point for ATP.

Belongs to the class-I aminoacyl-tRNA synthetase family.

The protein localises to the cytoplasm. It catalyses the reaction tRNA(Leu) + L-leucine + ATP = L-leucyl-tRNA(Leu) + AMP + diphosphate. This Streptococcus pyogenes serotype M18 (strain MGAS8232) protein is Leucine--tRNA ligase.